Here is a 540-residue protein sequence, read N- to C-terminus: Aquaporin-5 (540 aa).

The segment at 1–224 (MSGEGTDLPT…ESIDGYNYES (224 aa)) is disordered. Topologically, residues 1–263 (MSGEGTDLPT…QWMNSNFKNH (263 aa)) are cytoplasmic. Positions 25-44 (PGSSQQQLVPIAHTISSPSK) are enriched in polar residues. Basic and acidic residues-rich tracts occupy residues 119–133 (RARE…EREN), 140–155 (RARD…ERSR), 174–194 (YFDD…KGMR), and 204–214 (SGEKVRRKSTD). A helical membrane pass occupies residues 264 to 284 (FVATIGEFVGTTMFLFFAFAG). Residues 285–308 (TQVANIDSNTVNTTTGAATGFNIA) lie on the Extracellular side of the membrane. Residue Asn-296 is glycosylated (N-linked (GlcNAc...) asparagine). The chain crosses the membrane as a helical span at residues 309–329 (VQLYIAVIFGFSLMVNVWIFF). Over 330–332 (RIS) the chain is Cytoplasmic. The helical transmembrane segment at 333–353 (GGLFNPAVTLGMVLVGAIPIP) threads the bilayer. Residues 354-356 (RAA) lie on the Extracellular side of the membrane. The chain crosses the membrane as a helical span at residues 357 to 377 (CLFFAQILGGIAASGMVLGLF). The Cytoplasmic segment spans residues 378-393 (PTTFNVRTTLGASTST). A helical membrane pass occupies residues 394-414 (VQGVFIEAILTAELVFTIFML). Residues 415-420 (AKEKHK) are Extracellular-facing. The helical transmembrane segment at 421–441 (ATFIAPVGIGLALFIAEMVGV) threads the bilayer. Residues 442–467 (YYTGGSLNPARSFGPCVVSGSFDKEH) lie on the Cytoplasmic side of the membrane. The chain crosses the membrane as a helical span at residues 468–488 (WIYWIGPITGTFIAVFFYKFI). Over 489 to 540 (KMLEYEMANPGQDGDAKNDPTQNEKKREQILEERNRRYEKRNGSLRPGSRLS) the chain is Extracellular. The segment at 499–540 (GQDGDAKNDPTQNEKKREQILEERNRRYEKRNGSLRPGSRLS) is disordered. Positions 502–530 (GDAKNDPTQNEKKREQILEERNRRYEKRN) are enriched in basic and acidic residues. N-linked (GlcNAc...) asparagine glycosylation occurs at Asn-530.

It belongs to the MIP/aquaporin (TC 1.A.8) family.

The protein resides in the membrane. The enzyme catalyses H2O(in) = H2O(out). Functionally, water channel required to facilitate the transport of water across membranes. May play a role in the vegetative growth. The protein is Aquaporin-5 of Botryotinia fuckeliana (strain B05.10) (Noble rot fungus).